Reading from the N-terminus, the 205-residue chain is Macrophage immunometabolism regulator (205 aa).

The segment at 1–40 (MEVDINGVNRTNNSVPSTAEGSSPSKPDPEKPRCSSTPCS) is disordered. The span at 8-25 (VNRTNNSVPSTAEGSSPS) shows a compositional bias: polar residues.

The protein belongs to the UNC119-binding protein family. As to quaternary structure, interacts with unc119 family proteins; interaction preferentially takes place when unc119 proteins are unliganded with myristoylated proteins.

It is found in the cytoplasm. Its subcellular location is the cell projection. It localises to the cilium. May play a role in immune regulation through regulation of the macrophage function. May also play a role in trafficking of proteins via its interaction with unc119 family cargo adapters. May play a role in ciliary membrane localization. This is Macrophage immunometabolism regulator (macir) from Xenopus laevis (African clawed frog).